The following is a 181-amino-acid chain: Isopentenyl-diphosphate Delta-isomerase (181 aa).

Mn(2+) contacts are provided by H24 and H30. The Nudix hydrolase domain occupies L28–T168. C68 is an active-site residue. Mn(2+) is bound at residue H70. A Mg(2+)-binding site is contributed by E88. 2 residues coordinate Mn(2+): E117 and E119. E119 is a catalytic residue.

This sequence belongs to the IPP isomerase type 1 family. Requires Mg(2+) as cofactor. Mn(2+) is required as a cofactor.

Its subcellular location is the cytoplasm. The enzyme catalyses isopentenyl diphosphate = dimethylallyl diphosphate. Its pathway is isoprenoid biosynthesis; dimethylallyl diphosphate biosynthesis; dimethylallyl diphosphate from isopentenyl diphosphate: step 1/1. Its function is as follows. Catalyzes the 1,3-allylic rearrangement of the homoallylic substrate isopentenyl (IPP) to its highly electrophilic allylic isomer, dimethylallyl diphosphate (DMAPP). This Aliivibrio fischeri (strain MJ11) (Vibrio fischeri) protein is Isopentenyl-diphosphate Delta-isomerase.